A 487-amino-acid chain; its full sequence is L-tartrate/succinate antiporter (487 aa).

The next 14 membrane-spanning stretches (helical) occupy residues 10 to 30 (YLAP…AGLE), 33 to 53 (TWLY…EPVP), 54 to 74 (GAVV…WLLF), 93 to 113 (WAVF…FMFG), 137 to 157 (TLFL…VTPS), 189 to 209 (IGSY…AIFL), 236 to 256 (FLGM…LAYV), 292 to 312 (LMVG…AAMV), 313 to 333 (GYSV…DIVS), 340 to 360 (VFFW…TGFI), 370 to 390 (SLSG…FYLL), 393 to 413 (FFAS…AAAL), 418 to 438 (IPLP…SILT), and 465 to 485 (IFGL…MPVV).

Belongs to the SLC13A/DASS transporter (TC 2.A.47) family. DIT1 subfamily.

The protein localises to the cell inner membrane. The catalysed reaction is (2R,3R)-tartrate(out) + succinate(in) = (2R,3R)-tartrate(in) + succinate(out). Catalyzes the uptake of tartrate in exchange for intracellular succinate. Essential for anaerobic L-tartrate fermentation. The polypeptide is L-tartrate/succinate antiporter (ttdT) (Shigella boydii serotype 4 (strain Sb227)).